Here is a 180-residue protein sequence, read N- to C-terminus: Small ribosomal subunit protein uS5 (180 aa).

The S5 DRBM domain maps to 24 to 87 (MIEKLVAVNR…EQARKNLATV (64 aa)).

It belongs to the universal ribosomal protein uS5 family. In terms of assembly, part of the 30S ribosomal subunit. Contacts proteins S4 and S8.

Its function is as follows. With S4 and S12 plays an important role in translational accuracy. In terms of biological role, located at the back of the 30S subunit body where it stabilizes the conformation of the head with respect to the body. In Xanthomonas axonopodis pv. citri (strain 306), this protein is Small ribosomal subunit protein uS5.